A 608-amino-acid chain; its full sequence is Nuclear protein localization protein 4 homolog (608 aa).

Position 2 is an N-acetylalanine (A2). The residue at position 179 (K179) is an N6-acetyllysine. The MPN domain maps to 226–363 (IMFENHTVAD…ICRLSPDGHF (138 aa)). Residues 580–608 (TSAMWACQHCTFMNQPGTGHCEMCSLPRT) form a RanBP2-type zinc finger.

The protein belongs to the NPL4 family. Heterodimer with UFD1. The heterodimer binds ubiquitinated proteins. The heterodimer binds to VCP and inhibits Golgi membrane fusion. Interacts with ZFAND2B; probably through VCP.

It is found in the cytoplasm. Its subcellular location is the cytosol. The protein localises to the endoplasmic reticulum. It localises to the nucleus. It participates in protein degradation; proteasomal ubiquitin-dependent pathway. In terms of biological role, the ternary complex containing UFD1, VCP and NPLOC4 binds ubiquitinated proteins and is necessary for the export of misfolded proteins from the ER to the cytoplasm, where they are degraded by the proteasome. The NPLOC4-UFD1-VCP complex regulates spindle disassembly at the end of mitosis and is necessary for the formation of a closed nuclear envelope. Acts as a negative regulator of type I interferon production via the complex formed with VCP and UFD1, which binds to RIGI and recruits RNF125 to promote ubiquitination and degradation of RIGI. The chain is Nuclear protein localization protein 4 homolog (Nploc4) from Rattus norvegicus (Rat).